Consider the following 346-residue polypeptide: Anthranilate phosphoribosyltransferase (346 aa).

Residues Gly-88, 91 to 92 (GD), Thr-96, 98 to 101 (NIST), 116 to 124 (KHGNRAVSS), and Ala-128 each bind 5-phospho-alpha-D-ribose 1-diphosphate. Gly-88 lines the anthranilate pocket. Ser-100 serves as a coordination point for Mg(2+). An anthranilate-binding site is contributed by Asn-119. Residue Arg-174 coordinates anthranilate. Mg(2+)-binding residues include Asp-233 and Glu-234.

The protein belongs to the anthranilate phosphoribosyltransferase family. Homodimer. Requires Mg(2+) as cofactor.

It catalyses the reaction N-(5-phospho-beta-D-ribosyl)anthranilate + diphosphate = 5-phospho-alpha-D-ribose 1-diphosphate + anthranilate. It participates in amino-acid biosynthesis; L-tryptophan biosynthesis; L-tryptophan from chorismate: step 2/5. In terms of biological role, catalyzes the transfer of the phosphoribosyl group of 5-phosphorylribose-1-pyrophosphate (PRPP) to anthranilate to yield N-(5'-phosphoribosyl)-anthranilate (PRA). This is Anthranilate phosphoribosyltransferase from Paramagnetospirillum magneticum (strain ATCC 700264 / AMB-1) (Magnetospirillum magneticum).